Here is a 537-residue protein sequence, read N- to C-terminus: Trypsin-resistant surface T6 protein (537 aa).

The signal sequence occupies residues 1 to 22 (MLACLAILAVVGLGMTRVSALS). Residues 310-330 (GNTYDNLDKKPDKGNGITSKE) are hydrophilic. The LPXTG sorting signal signature appears at 504–508 (LPSTG). Thr507 is subject to Pentaglycyl murein peptidoglycan amidated threonine. A propeptide spans 508 to 537 (GSIGTYLFKAIGSAAMIGAIGIYIVKRRKA) (removed by sortase).

Its subcellular location is the secreted. The protein resides in the cell wall. The sequence is that of Trypsin-resistant surface T6 protein (tee6) from Streptococcus pyogenes serotype M6 (strain ATCC BAA-946 / MGAS10394).